Consider the following 129-residue polypeptide: UPF0148 protein AF_2370 (129 aa).

The interval 61 to 80 is disordered; that stretch reads SAAKAESEEKPPESTKPAVK.

The protein belongs to the UPF0148 family.

The sequence is that of UPF0148 protein AF_2370 from Archaeoglobus fulgidus (strain ATCC 49558 / DSM 4304 / JCM 9628 / NBRC 100126 / VC-16).